Consider the following 517-residue polypeptide: MDQTPPARSEPLVSGIRTPPVRRNSKLATLGRIFKPWKWRKKKNEKLKQTTSALEKKMAGRQGREELIKQGLLEMMEQDSESKACSPKEGSQPAQSEPSAGEQETLTSEGVQPGSPSASGTDQASQDELLSSDAHPDDTAKMSSASSGEEADAGNLLPTTDEPSQEALSGSLDSPPRTLERSASQLPSPPLLPTPPPKASSKATKNVTGQAALFQGSSMKNNEPVLRGQLPTPTGSPHLTTVHRPLPPSRVIEELHRALATKHRQDSFQGRECRGSPKKRMDVRLSRTSSMERGKERDEAWSFDGASENKWTAAKDSEENKENLILSSELKDDLLLYQDEEALNDSIISGTLPRKCKKELLAVKLRNRPSKQELEDRNIFPRRTDEERQEIRQQIEMKLSKRLSQRPAVEELERRNILKQRNDQTEQEERREIKQRLTRKLNQRPTVDELRDRKILIRFSDYVEVARAQDYDRRADKPWTRLSAADKAAIRKELNEYKSNEMEVHASSKHLTRFHRP.

Positions 1–24 are disordered; it reads MDQTPPARSEPLVSGIRTPPVRRN. Residue Thr29 is modified to Phosphothreonine. 2 disordered regions span residues 41–247 and 260–320; these read KKKN…RPLP and ATKH…SEEN. One copy of the RPEL 1 repeat lies at 52 to 77; the sequence is SALEKKMAGRQGREELIKQGLLEMME. The span at 54-68 shows a compositional bias: basic and acidic residues; the sequence is LEKKMAGRQGREELI. Polar residues-rich tracts occupy residues 92 to 129 and 157 to 172; these read QPAQ…QDEL and LPTT…SGSL. A compositionally biased stretch (pro residues) spans 187–198; it reads PSPPLLPTPPPK. Position 188 is a phosphoserine (Ser188). At Thr194 the chain carries Phosphothreonine. Positions 260 to 300 are enriched in basic and acidic residues; that stretch reads ATKHRQDSFQGRECRGSPKKRMDVRLSRTSSMERGKERDEA. 3 RPEL repeats span residues 359–384, 397–422, and 435–460; these read ELLA…PRRT, MKLS…KQRN, and QRLT…IRFS. Positions 408 to 444 form a coiled coil; that stretch reads AVEELERRNILKQRNDQTEQEERREIKQRLTRKLNQR.

Belongs to the phosphatase and actin regulator family. In terms of assembly, binds actin and PPP1CA; thus inhibiting the protein phosphatase 1 (PP1) activity. In terms of tissue distribution, diffusely expressed throughout the brain cortex, with highest levels in the cortex and the hippocampus and lower levels in the striatum and thalamus.

The protein localises to the nucleus matrix. This chain is Phosphatase and actin regulator 3 (Phactr3), found in Rattus norvegicus (Rat).